The sequence spans 230 residues: UPF0173 metal-dependent hydrolase SPO2976 (230 aa).

Belongs to the UPF0173 family.

This is UPF0173 metal-dependent hydrolase SPO2976 from Ruegeria pomeroyi (strain ATCC 700808 / DSM 15171 / DSS-3) (Silicibacter pomeroyi).